The chain runs to 395 residues: Phosphoglycerate kinase (395 aa).

Residues 21 to 23 (DFN), Arg-36, 59 to 62 (HLGR), Arg-120, and Arg-153 contribute to the substrate site. ATP is bound by residues Lys-203, Glu-325, and 351–354 (GGDS).

It belongs to the phosphoglycerate kinase family. In terms of assembly, monomer.

The protein localises to the cytoplasm. The enzyme catalyses (2R)-3-phosphoglycerate + ATP = (2R)-3-phospho-glyceroyl phosphate + ADP. It functions in the pathway carbohydrate degradation; glycolysis; pyruvate from D-glyceraldehyde 3-phosphate: step 2/5. The polypeptide is Phosphoglycerate kinase (Roseiflexus sp. (strain RS-1)).